The following is a 91-amino-acid chain: UPF0250 protein PputW619_0619 (91 aa).

The protein belongs to the UPF0250 family.

This chain is UPF0250 protein PputW619_0619, found in Pseudomonas putida (strain W619).